The primary structure comprises 319 residues: Ribosomal RNA large subunit methyltransferase F (319 aa).

A disordered region spans residues 1 to 25; it reads MAPFFSAMTSKKQSQGLPKGPHPDN. The span at 7–16 shows a compositional bias: polar residues; sequence AMTSKKQSQG.

The protein belongs to the methyltransferase superfamily. METTL16/RlmF family.

It is found in the cytoplasm. The catalysed reaction is adenosine(1618) in 23S rRNA + S-adenosyl-L-methionine = N(6)-methyladenosine(1618) in 23S rRNA + S-adenosyl-L-homocysteine + H(+). Functionally, specifically methylates the adenine in position 1618 of 23S rRNA. The sequence is that of Ribosomal RNA large subunit methyltransferase F from Shewanella amazonensis (strain ATCC BAA-1098 / SB2B).